The following is an 89-amino-acid chain: Small ribosomal subunit protein uS15 (89 aa).

It belongs to the universal ribosomal protein uS15 family. Part of the 30S ribosomal subunit. Forms a bridge to the 50S subunit in the 70S ribosome, contacting the 23S rRNA.

Its function is as follows. One of the primary rRNA binding proteins, it binds directly to 16S rRNA where it helps nucleate assembly of the platform of the 30S subunit by binding and bridging several RNA helices of the 16S rRNA. Functionally, forms an intersubunit bridge (bridge B4) with the 23S rRNA of the 50S subunit in the ribosome. This Azotobacter vinelandii (strain DJ / ATCC BAA-1303) protein is Small ribosomal subunit protein uS15.